The chain runs to 615 residues: uncharacterized protein (615 aa).

S48 bears the Phosphoserine mark. Acidic residues predominate over residues 424-433 (DRENELEEGS). Residues 424–615 (DRENELEEGS…YARKKTKKNV (192 aa)) form a disordered region. Basic and acidic residues-rich tracts occupy residues 439–476 (DNER…KEVG), 484–496 (DGNK…KEVA), 504–521 (ESEK…KEVA), and 529–561 (ESEK…EPSK). 2 stretches are compositionally biased toward basic residues: residues 579–589 (KKPKVVKKVAK) and 606–615 (YARKKTKKNV).

This is an uncharacterized protein from Arabidopsis thaliana (Mouse-ear cress).